We begin with the raw amino-acid sequence, 190 residues long: dCTP deaminase, dUMP-forming (190 aa).

Residues Lys-101 to Arg-106, Asp-119, Thr-127 to Glu-129, Gln-148, Tyr-162, and Gln-174 contribute to the dCTP site. Glu-129 functions as the Proton donor/acceptor in the catalytic mechanism. The interval Gly-163–Thr-190 is disordered. Polar residues predominate over residues Tyr-171 to Thr-190.

This sequence belongs to the dCTP deaminase family. Homotrimer.

It catalyses the reaction dCTP + 2 H2O = dUMP + NH4(+) + diphosphate. The protein operates within pyrimidine metabolism; dUMP biosynthesis; dUMP from dCTP: step 1/1. Functionally, bifunctional enzyme that catalyzes both the deamination of dCTP to dUTP and the hydrolysis of dUTP to dUMP without releasing the toxic dUTP intermediate. This chain is dCTP deaminase, dUMP-forming, found in Mycobacterium avium (strain 104).